The following is a 215-amino-acid chain: Probable transaldolase (215 aa).

Lysine 83 (schiff-base intermediate with substrate) is an active-site residue.

It belongs to the transaldolase family. Type 3B subfamily.

It localises to the cytoplasm. The catalysed reaction is D-sedoheptulose 7-phosphate + D-glyceraldehyde 3-phosphate = D-erythrose 4-phosphate + beta-D-fructose 6-phosphate. The protein operates within carbohydrate degradation; pentose phosphate pathway; D-glyceraldehyde 3-phosphate and beta-D-fructose 6-phosphate from D-ribose 5-phosphate and D-xylulose 5-phosphate (non-oxidative stage): step 2/3. In terms of biological role, transaldolase is important for the balance of metabolites in the pentose-phosphate pathway. This chain is Probable transaldolase, found in Methanococcus maripaludis (strain C5 / ATCC BAA-1333).